The chain runs to 174 residues: Peptide deformylase (174 aa).

Fe cation contacts are provided by Cys-91 and His-133. The active site involves Glu-134. Fe cation is bound at residue His-137.

The protein belongs to the polypeptide deformylase family. Fe(2+) serves as cofactor.

It carries out the reaction N-terminal N-formyl-L-methionyl-[peptide] + H2O = N-terminal L-methionyl-[peptide] + formate. Functionally, removes the formyl group from the N-terminal Met of newly synthesized proteins. Requires at least a dipeptide for an efficient rate of reaction. N-terminal L-methionine is a prerequisite for activity but the enzyme has broad specificity at other positions. This chain is Peptide deformylase, found in Fusobacterium nucleatum subsp. nucleatum (strain ATCC 25586 / DSM 15643 / BCRC 10681 / CIP 101130 / JCM 8532 / KCTC 2640 / LMG 13131 / VPI 4355).